Here is a 266-residue protein sequence, read N- to C-terminus: uncharacterized protein (266 aa).

7 helical membrane passes run 25-45, 64-84, 111-131, 158-178, 186-206, 209-229, and 230-250; these read LPSLLVLGFLGGAFIALGYLL, IGAAVFPVGLILVVLAGAELI, IVTIMNLIGALFVAYFFGHLV, VLISAIGCNWLVCLAVWLSFG, ILGIWFPIMAFVAIGFQHVVA, FVIPAAIFAGSFTWGQFIGNI, and IPAFIGNVIGGAVFVGLIYFI.

Belongs to the FNT transporter (TC 1.A.16) family.

It localises to the cell membrane. This is an uncharacterized protein from Bacillus subtilis (strain 168).